The chain runs to 316 residues: Transcription initiation factor IIB (316 aa).

The TFIIB-type zinc-finger motif lies at 11–42; it reads PKVTCPNHPDALLVEDYRAGDMICSECGLVVG. Zn(2+) is bound by residues Cys-15, His-18, Cys-34, and Cys-37. Tandem repeats lie at residues 124–200 and 218–294.

Belongs to the TFIIB family.

Its subcellular location is the nucleus. The protein localises to the chromosome. The enzyme catalyses L-lysyl-[protein] + acetyl-CoA = N(6)-acetyl-L-lysyl-[protein] + CoA + H(+). In terms of biological role, general transcription factor that plays a role in transcription initiation by RNA polymerase II (Pol II). Involved in the pre-initiation complex (PIC) formation and Pol II recruitment at promoter DNA. Together with the TATA box-bound TBP forms the core initiation complex and provides a bridge between TBP and the Pol II-TFIIF complex. Released from the PIC early following the onset of transcription during the initiation and elongation transition and reassociates with TBP during the next transcription cycle. Associates with chromatin to core promoter-specific regions. Binds to two distinct DNA core promoter consensus sequence elements in a TBP-independent manner; these IIB-recognition elements (BREs) are localized immediately upstream (BREu), 5'-[GC][GC][GA]CGCC-3', and downstream (BREd), 5'-[GA]T[TGA][TG][GT][TG][TG]-3', of the TATA box element. Modulates transcription start site selection. Also exhibits autoacetyltransferase activity that contributes to the activated transcription. The protein is Transcription initiation factor IIB of Xenopus laevis (African clawed frog).